Here is a 196-residue protein sequence, read N- to C-terminus: Phosphoheptose isomerase (196 aa).

The SIS domain occupies 36 to 196; it reads MAQALQAEGK…LIDQHLFGGA (161 aa). 51–53 is a substrate binding site; the sequence is NGG. His60 and Glu64 together coordinate Zn(2+). Substrate is bound by residues Glu64, 93–94, 119–121, Ser124, and Gln174; these read ND and STS. 2 residues coordinate Zn(2+): Gln174 and His182.

This sequence belongs to the SIS family. GmhA subfamily. In terms of assembly, homotetramer. Zn(2+) is required as a cofactor.

It localises to the cytoplasm. The enzyme catalyses 2 D-sedoheptulose 7-phosphate = D-glycero-alpha-D-manno-heptose 7-phosphate + D-glycero-beta-D-manno-heptose 7-phosphate. The protein operates within carbohydrate biosynthesis; D-glycero-D-manno-heptose 7-phosphate biosynthesis; D-glycero-alpha-D-manno-heptose 7-phosphate and D-glycero-beta-D-manno-heptose 7-phosphate from sedoheptulose 7-phosphate: step 1/1. In terms of biological role, catalyzes the isomerization of sedoheptulose 7-phosphate in D-glycero-D-manno-heptose 7-phosphate. The chain is Phosphoheptose isomerase from Alkalilimnicola ehrlichii (strain ATCC BAA-1101 / DSM 17681 / MLHE-1).